The chain runs to 104 residues: DNA-directed RNA polymerase subunit omega (104 aa).

A disordered region spans residues 60–104; that stretch reads VIHPDPEGKREAVRRRAEEERLRKEEEERKIKEQIAKEKEEGEKI. Over residues 63–104 the composition is skewed to basic and acidic residues; the sequence is PDPEGKREAVRRRAEEERLRKEEEERKIKEQIAKEKEEGEKI.

The protein belongs to the RNA polymerase subunit omega family. The RNAP catalytic core consists of 2 alpha, 1 beta, 1 beta' and 1 omega subunit. When a sigma factor is associated with the core the holoenzyme is formed, which can initiate transcription.

The catalysed reaction is RNA(n) + a ribonucleoside 5'-triphosphate = RNA(n+1) + diphosphate. Promotes RNA polymerase assembly. Latches the N- and C-terminal regions of the beta' subunit thereby facilitating its interaction with the beta and alpha subunits. This Streptococcus sanguinis (strain SK36) protein is DNA-directed RNA polymerase subunit omega.